Here is a 290-residue protein sequence, read N- to C-terminus: ATP synthase gamma chain (290 aa).

The protein belongs to the ATPase gamma chain family. F-type ATPases have 2 components, CF(1) - the catalytic core - and CF(0) - the membrane proton channel. CF(1) has five subunits: alpha(3), beta(3), gamma(1), delta(1), epsilon(1). CF(0) has three main subunits: a, b and c.

The protein resides in the cell membrane. Produces ATP from ADP in the presence of a proton gradient across the membrane. The gamma chain is believed to be important in regulating ATPase activity and the flow of protons through the CF(0) complex. The sequence is that of ATP synthase gamma chain from Roseiflexus castenholzii (strain DSM 13941 / HLO8).